The following is a 414-amino-acid chain: MSQANLSETLFKPRFKHPETSTLVRRFSAGKPQAMQSALSGNHVDHWYRLINRLMWIWRGVTPQEILDVQARIVMSEAERTDPELFDTVIGYRGGNWIFEWAKEAMQWQQKAGQEADPLLSGRHWLHASNLYSIAAYPHIKGDELAEQAQALANRAYEEAAQRLPGSLRELEFTIPGGSPITGFLHMPKGDGPFPTVLMCGGLDSLQTDYYNLYENYFSPLGIAMLTIDMPSIGFSSKWTLNQDTSLLHQHALRHLENVPWVDHTRVAAFGFRFGANIAVRLGYLEPQRLKAVACLGPVVHGLLVDPLHQGRVPEMYLDVLASRLGMHDASDEALRVELNRYSLKTQGLLGRRCPTPMLSGFWKDDPFSPEEESRLITSSSADGKLLEIPFNPVYRNFDHALRQIARWINHRFG.

This sequence belongs to the FrsA family.

It catalyses the reaction a carboxylic ester + H2O = an alcohol + a carboxylate + H(+). In terms of biological role, catalyzes the hydrolysis of esters. This chain is Esterase FrsA, found in Klebsiella pneumoniae (strain 342).